The primary structure comprises 198 residues: V-type proton ATPase subunit E (198 aa).

The protein belongs to the V-ATPase E subunit family.

Functionally, produces ATP from ADP in the presence of a proton gradient across the membrane. The chain is V-type proton ATPase subunit E from Borrelia duttonii (strain Ly).